The following is a 95-amino-acid chain: Putative septation protein SpoVG (95 aa).

This sequence belongs to the SpoVG family.

Its function is as follows. Could be involved in septation. The chain is Putative septation protein SpoVG from Clostridium acetobutylicum (strain ATCC 824 / DSM 792 / JCM 1419 / IAM 19013 / LMG 5710 / NBRC 13948 / NRRL B-527 / VKM B-1787 / 2291 / W).